Reading from the N-terminus, the 1036-residue chain is uncharacterized protein (1036 aa).

A run of 2 helical transmembrane segments spans residues 4 to 24 (YLFIPLLVSFLFPVALANASL) and 1004 to 1024 (ILWVIFGIIISLMISSAVLFL).

The protein belongs to the MG414/MG415 family.

It localises to the cell membrane. This is an uncharacterized protein from Mycoplasma genitalium (strain ATCC 33530 / DSM 19775 / NCTC 10195 / G37) (Mycoplasmoides genitalium).